We begin with the raw amino-acid sequence, 279 residues long: MIKPGIILGNIICLSGGFFLALNEKLSKIFFLKTVFGLILIISSSCILNNIIDRDIDKKMNRTKNRFLCINTNVFLLKILFFFSIILLILGLLVFYIYINFLCTIISFFGFFFYVYLYSYLFKRKTYFSTFVGSVSGSLPPIIGYVAVNNCLNRCCTILFFMFSFWQIAHSYSIIIYRYSDYKLLNLPVFPILYGKLKTIIFISICILNLFFFNFLLYFFGYVKFFYFLYTSFFIFLWFIFSFLSNSRYFTIKIWSRIMFFFSIFIIFMISFLMSLNNF.

The next 9 membrane-spanning stretches (helical) occupy residues M1 to A21, I29 to N49, I79 to I99, F101 to L121, F128 to V148, C156 to I176, I200 to F220, F225 to S245, and I254 to M274.

The protein belongs to the UbiA prenyltransferase family. Protoheme IX farnesyltransferase subfamily.

The protein resides in the cell membrane. The catalysed reaction is heme b + (2E,6E)-farnesyl diphosphate + H2O = Fe(II)-heme o + diphosphate. It participates in porphyrin-containing compound metabolism; heme O biosynthesis; heme O from protoheme: step 1/1. Its function is as follows. Converts heme B (protoheme IX) to heme O by substitution of the vinyl group on carbon 2 of heme B porphyrin ring with a hydroxyethyl farnesyl side group. The sequence is that of Protoheme IX farnesyltransferase from Buchnera aphidicola subsp. Cinara cedri (strain Cc).